Consider the following 288-residue polypeptide: Diaminopimelate epimerase (288 aa).

Positions 17, 47, and 67 each coordinate substrate. The active-site Proton donor is the cysteine 76. Residues 77–78 (GN), asparagine 163, asparagine 196, and 214–215 (ER) each bind substrate. Cysteine 223 serves as the catalytic Proton acceptor. 224-225 (GS) is a binding site for substrate.

It belongs to the diaminopimelate epimerase family. As to quaternary structure, homodimer.

It localises to the cytoplasm. The enzyme catalyses (2S,6S)-2,6-diaminopimelate = meso-2,6-diaminopimelate. The protein operates within amino-acid biosynthesis; L-lysine biosynthesis via DAP pathway; DL-2,6-diaminopimelate from LL-2,6-diaminopimelate: step 1/1. In terms of biological role, catalyzes the stereoinversion of LL-2,6-diaminopimelate (L,L-DAP) to meso-diaminopimelate (meso-DAP), a precursor of L-lysine and an essential component of the bacterial peptidoglycan. In Rhodopseudomonas palustris (strain BisB18), this protein is Diaminopimelate epimerase.